We begin with the raw amino-acid sequence, 102 residues long: Nuclear protein 2 (102 aa).

Disordered stretches follow at residues 1–26 (MDPP…ALPT) and 46–102 (PASG…TRLA). The segment covering 85–102 (QRKRRQRQLQPRPRTRLA) has biased composition (basic residues).

Belongs to the NUPR family.

It is found in the nucleus. Its function is as follows. Acts as a transcriptional repressor by inhibiting gene expression at the NUPR1 promoter in a p53/TP53-dependent manner in cancer cells. Involved in the G1 cell cycle arrest, and in a decrease in cell viability and cell proliferation of pancreatic cancer cells. Plays a role as a negative regulator of the protumoral factor NUPR1. The chain is Nuclear protein 2 from Mus musculus (Mouse).